A 286-amino-acid polypeptide reads, in one-letter code: ATP synthase gamma chain (286 aa).

Belongs to the ATPase gamma chain family. As to quaternary structure, F-type ATPases have 2 components, CF(1) - the catalytic core - and CF(0) - the membrane proton channel. CF(1) has five subunits: alpha(3), beta(3), gamma(1), delta(1), epsilon(1). CF(0) has three main subunits: a, b and c.

The protein localises to the cell inner membrane. In terms of biological role, produces ATP from ADP in the presence of a proton gradient across the membrane. The gamma chain is believed to be important in regulating ATPase activity and the flow of protons through the CF(0) complex. The sequence is that of ATP synthase gamma chain from Shewanella sediminis (strain HAW-EB3).